The chain runs to 446 residues: MREIVHIQAGQCGNQIGAKFWEVISDEHGVDPSGEYRGDSELQIERINVYFNEAAGGRYVPRAILVDLEPGTMDSVRAGPFGQIFRPDNFVFGQSGAGNNWAKGHYTEGAELVDAVLDVVRKRSEACDCLQGFQICHSLGGGTGAGMGTLLIAKIREEYPDRMMCTFSVVPSPKVSDTVVEPYNATLSVHQLVEHADEVFCIDNEALYDICFRTLKLTCPTYGDLNHLVSLVMSGCTSCLRFPGQLNADLRKLAVNLIPFPRLHFFLVGFAPLTSRGSQIYRALTVPELVSQMFDNKNMMAASDPRHGRYLTAAAMFRGRMSTKEVDEQMLNIQNKNSSYFVEWIPNNMKVSVCDIPPRGLKMAATFIGNSTCIQELFKRVGEQFSAMFRRKAFLHWYTGEGMDEMEFTEAESNMNDLVSEYQQYQEAGVDEGEEFEEEEDFGDEQ.

GTP contacts are provided by Gln11, Glu69, Ser138, Gly142, Thr143, Gly144, Asn204, and Asn226. Residue Glu69 coordinates Mg(2+). The interval 427-446 is disordered; it reads EAGVDEGEEFEEEEDFGDEQ. Residues 429 to 446 show a composition bias toward acidic residues; that stretch reads GVDEGEEFEEEEDFGDEQ.

This sequence belongs to the tubulin family. Dimer of alpha and beta chains. A typical microtubule is a hollow water-filled tube with an outer diameter of 25 nm and an inner diameter of 15 nM. Alpha-beta heterodimers associate head-to-tail to form protofilaments running lengthwise along the microtubule wall with the beta-tubulin subunit facing the microtubule plus end conferring a structural polarity. Microtubules usually have 13 protofilaments but different protofilament numbers can be found in some organisms and specialized cells. It depends on Mg(2+) as a cofactor.

It is found in the cytoplasm. It localises to the cytoskeleton. Its function is as follows. Tubulin is the major constituent of microtubules, a cylinder consisting of laterally associated linear protofilaments composed of alpha- and beta-tubulin heterodimers. Microtubules grow by the addition of GTP-tubulin dimers to the microtubule end, where a stabilizing cap forms. Below the cap, tubulin dimers are in GDP-bound state, owing to GTPase activity of alpha-tubulin. In Giardia intestinalis (Giardia lamblia), this protein is Tubulin beta chain.